The chain runs to 101 residues: Small ribosomal subunit protein uS14 (101 aa).

The protein belongs to the universal ribosomal protein uS14 family. As to quaternary structure, part of the 30S ribosomal subunit. Contacts proteins S3 and S10.

Binds 16S rRNA, required for the assembly of 30S particles and may also be responsible for determining the conformation of the 16S rRNA at the A site. In Francisella philomiragia subsp. philomiragia (strain ATCC 25017 / CCUG 19701 / FSC 153 / O#319-036), this protein is Small ribosomal subunit protein uS14.